Here is a 251-residue protein sequence, read N- to C-terminus: PF03932 family protein CutC (251 aa).

Belongs to the CutC family.

It localises to the cytoplasm. This chain is PF03932 family protein CutC, found in Erwinia tasmaniensis (strain DSM 17950 / CFBP 7177 / CIP 109463 / NCPPB 4357 / Et1/99).